A 400-amino-acid polypeptide reads, in one-letter code: 3-phenylpropionate/cinnamic acid dioxygenase ferredoxin--NAD(+) reductase component (400 aa).

FAD is bound at residue 5-36 (TIIIVGGGQAAAMAAASLRQQGFTGELHLFSD). 146–174 (SVVIVGAGTIGLELAASATQRGCKVTVIE) contacts NAD(+).

The protein belongs to the bacterial ring-hydroxylating dioxygenase ferredoxin reductase family. In terms of assembly, this dioxygenase system consists of four proteins: the two subunits of the hydroxylase component (HcaE and HcaF), a ferredoxin (HcaC) and a ferredoxin reductase (HcaD). Requires FAD as cofactor.

The catalysed reaction is 2 reduced [2Fe-2S]-[ferredoxin] + NAD(+) + H(+) = 2 oxidized [2Fe-2S]-[ferredoxin] + NADH. Its pathway is aromatic compound metabolism; 3-phenylpropanoate degradation. Its function is as follows. Part of the multicomponent 3-phenylpropionate dioxygenase, that converts 3-phenylpropionic acid (PP) and cinnamic acid (CI) into 3-phenylpropionate-dihydrodiol (PP-dihydrodiol) and cinnamic acid-dihydrodiol (CI-dihydrodiol), respectively. The sequence is that of 3-phenylpropionate/cinnamic acid dioxygenase ferredoxin--NAD(+) reductase component from Escherichia coli (strain SMS-3-5 / SECEC).